The chain runs to 139 residues: Actin-depolymerizing factor 1 (139 aa).

Residues 5–139 enclose the ADF-H domain; sequence ASGMAVCDEC…SMDIVKSRAL (135 aa).

Belongs to the actin-binding proteins ADF family.

Functionally, actin-depolymerizing protein. Severs actin filaments (F-actin) and binds to actin monomers. The protein is Actin-depolymerizing factor 1 (ADF1) of Oryza sativa subsp. japonica (Rice).